We begin with the raw amino-acid sequence, 115 residues long: Protein V2 (115 aa).

Belongs to the geminiviridae protein AV2/V2 family. As to quaternary structure, interacts with host SGS3.

It localises to the host cytoplasm. The protein localises to the host perinuclear region. Its function is as follows. Through its interaction with host SGS3, acts as a suppressor of RNA-mediated gene silencing, also known as post-transcriptional gene silencing (PTGS), a mechanism of plant viral defense that limits the accumulation of viral RNAs. This chain is Protein V2, found in Cynanchum acutum (Little mallow).